Reading from the N-terminus, the 127-residue chain is Aspartate 1-decarboxylase (127 aa).

Ser25 serves as the catalytic Schiff-base intermediate with substrate; via pyruvic acid. Ser25 is subject to Pyruvic acid (Ser). Thr57 is a substrate binding site. Tyr58 acts as the Proton donor in catalysis. Position 73 to 75 (73 to 75) interacts with substrate; sequence GAA.

This sequence belongs to the PanD family. In terms of assembly, heterooctamer of four alpha and four beta subunits. It depends on pyruvate as a cofactor. Is synthesized initially as an inactive proenzyme, which is activated by self-cleavage at a specific serine bond to produce a beta-subunit with a hydroxyl group at its C-terminus and an alpha-subunit with a pyruvoyl group at its N-terminus.

Its subcellular location is the cytoplasm. It carries out the reaction L-aspartate + H(+) = beta-alanine + CO2. Its pathway is cofactor biosynthesis; (R)-pantothenate biosynthesis; beta-alanine from L-aspartate: step 1/1. Functionally, catalyzes the pyruvoyl-dependent decarboxylation of aspartate to produce beta-alanine. This chain is Aspartate 1-decarboxylase, found in Bacillus cereus (strain ATCC 10987 / NRS 248).